Here is a 44-residue protein sequence, read N- to C-terminus: Photosystem II reaction center protein K (44 aa).

Residues methionine 1–alanine 7 constitute a propeptide that is removed on maturation. The chain crosses the membrane as a helical span at residues leucine 23 to phenylalanine 43.

It belongs to the PsbK family. In terms of assembly, PSII is composed of 1 copy each of membrane proteins PsbA, PsbB, PsbC, PsbD, PsbE, PsbF, PsbH, PsbI, PsbJ, PsbK, PsbL, PsbM, PsbT, PsbX, PsbY, PsbZ, Psb30/Ycf12, at least 3 peripheral proteins of the oxygen-evolving complex and a large number of cofactors. It forms dimeric complexes.

It is found in the plastid. Its subcellular location is the chloroplast thylakoid membrane. In terms of biological role, one of the components of the core complex of photosystem II (PSII). PSII is a light-driven water:plastoquinone oxidoreductase that uses light energy to abstract electrons from H(2)O, generating O(2) and a proton gradient subsequently used for ATP formation. It consists of a core antenna complex that captures photons, and an electron transfer chain that converts photonic excitation into a charge separation. This Trieres chinensis (Marine centric diatom) protein is Photosystem II reaction center protein K.